The primary structure comprises 462 residues: ATP synthase subunit beta (462 aa).

Residue 152–159 coordinates ATP; sequence GGAGVGKT.

It belongs to the ATPase alpha/beta chains family. As to quaternary structure, F-type ATPases have 2 components, CF(1) - the catalytic core - and CF(0) - the membrane proton channel. CF(1) has five subunits: alpha(3), beta(3), gamma(1), delta(1), epsilon(1). CF(0) has three main subunits: a(1), b(2) and c(9-12). The alpha and beta chains form an alternating ring which encloses part of the gamma chain. CF(1) is attached to CF(0) by a central stalk formed by the gamma and epsilon chains, while a peripheral stalk is formed by the delta and b chains.

The protein resides in the cell inner membrane. It catalyses the reaction ATP + H2O + 4 H(+)(in) = ADP + phosphate + 5 H(+)(out). Functionally, produces ATP from ADP in the presence of a proton gradient across the membrane. The catalytic sites are hosted primarily by the beta subunits. This chain is ATP synthase subunit beta, found in Aeromonas hydrophila subsp. hydrophila (strain ATCC 7966 / DSM 30187 / BCRC 13018 / CCUG 14551 / JCM 1027 / KCTC 2358 / NCIMB 9240 / NCTC 8049).